Reading from the N-terminus, the 103-residue chain is Turripeptide OL55-like (103 aa).

Contains 8 disulfide bonds. Expressed by the venom duct.

It localises to the secreted. Acts as a neurotoxin by inhibiting an ion channel. The chain is Turripeptide OL55-like from Lophiotoma albina (Sea snail).